The following is a 229-amino-acid chain: 3-dehydroquinate dehydratase (229 aa).

3-dehydroquinate-binding positions include 29 to 31 (ELR) and Arg56. His120 (proton donor/acceptor) is an active-site residue. Catalysis depends on Lys146, which acts as the Schiff-base intermediate with substrate. Positions 187, 208, and 212 each coordinate 3-dehydroquinate.

It belongs to the type-I 3-dehydroquinase family. In terms of assembly, homodimer.

The catalysed reaction is 3-dehydroquinate = 3-dehydroshikimate + H2O. Its pathway is metabolic intermediate biosynthesis; chorismate biosynthesis; chorismate from D-erythrose 4-phosphate and phosphoenolpyruvate: step 3/7. Its function is as follows. Involved in the third step of the chorismate pathway, which leads to the biosynthesis of aromatic amino acids. Catalyzes the cis-dehydration of 3-dehydroquinate (DHQ) and introduces the first double bond of the aromatic ring to yield 3-dehydroshikimate. The polypeptide is 3-dehydroquinate dehydratase (Haloarcula marismortui (strain ATCC 43049 / DSM 3752 / JCM 8966 / VKM B-1809) (Halobacterium marismortui)).